A 52-amino-acid polypeptide reads, in one-letter code: Histone H2A (52 aa).

The interval 1–25 is disordered; that stretch reads MSGRGKTGGKARAKAKTRSSRAGLQ. Position 2 is an N-acetylserine (serine 2). Position 2 is a phosphoserine (serine 2). Lysine 6 is modified (N6-(2-hydroxyisobutyryl)lysine). Residue lysine 6 is modified to N6-acetyllysine. A compositionally biased stretch (basic residues) spans 7-19; that stretch reads TGGKARAKAKTRS. Lysine 10 bears the N6-(2-hydroxyisobutyryl)lysine; alternate mark. At lysine 10 the chain carries N6-lactoyllysine; alternate. Lysine 10 carries the N6-succinyllysine modification. Residues lysine 14 and lysine 16 each participate in a glycyl lysine isopeptide (Lys-Gly) (interchain with G-Cter in ubiquitin) cross-link. At lysine 37 the chain carries N6-(2-hydroxyisobutyryl)lysine; alternate.

The nucleosome is a histone octamer containing two molecules each of H2A, H2B, H3 and H4 assembled in one H3-H4 heterotetramer and two H2A-H2B heterodimers. The octamer wraps approximately 147 bp of DNA. In terms of processing, acetylation is not necessary for the antibacterial activity. Monoubiquitination in C-terminus gives a specific tag for epigenetic transcriptional repression. Following DNA double-strand breaks (DSBs), it is ubiquitinated through 'Lys-63' linkage of ubiquitin moieties, leading to the recruitment of repair proteins to sites of DNA damage. H2AK119Ub and ionizing radiation-induced 'Lys-63'-linked ubiquitination are distinct events. Post-translationally, phosphorylation on Ser-2 is enhanced during mitosis. Phosphorylation on Ser-2 directly represses transcription.

The protein localises to the nucleus. It localises to the chromosome. The protein resides in the secreted. Functionally, core component of nucleosome. Nucleosomes wrap and compact DNA into chromatin, limiting DNA accessibility to the cellular machineries which require DNA as a template. Histones thereby play a central role in transcription regulation, DNA repair, DNA replication and chromosomal stability. DNA accessibility is regulated via a complex set of post-translational modifications of histones, also called histone code, and nucleosome remodeling. Hipposin shows strong antimicrobial activity against several Gram-positive and Gram-negative bacteria. This Hippoglossus hippoglossus (Atlantic halibut) protein is Histone H2A.